The chain runs to 483 residues: Regulatory protein ViaA (483 aa).

The protein belongs to the ViaA family. Homodimer. Interacts with RavA.

It is found in the cytoplasm. Functionally, component of the RavA-ViaA chaperone complex, which may act on the membrane to optimize the function of some of the respiratory chains. ViaA stimulates the ATPase activity of RavA. In Salmonella dublin (strain CT_02021853), this protein is Regulatory protein ViaA.